A 261-amino-acid chain; its full sequence is Triosephosphate isomerase (261 aa).

Position 10–12 (10–12 (NWK)) interacts with substrate. His-100 functions as the Electrophile in the catalytic mechanism. Glu-172 functions as the Proton acceptor in the catalytic mechanism. Residues Gly-178, Ser-218, and 239–240 (GG) contribute to the substrate site.

It belongs to the triosephosphate isomerase family. In terms of assembly, homodimer.

The protein localises to the cytoplasm. The catalysed reaction is D-glyceraldehyde 3-phosphate = dihydroxyacetone phosphate. The protein operates within carbohydrate biosynthesis; gluconeogenesis. It participates in carbohydrate degradation; glycolysis; D-glyceraldehyde 3-phosphate from glycerone phosphate: step 1/1. Its function is as follows. Involved in the gluconeogenesis. Catalyzes stereospecifically the conversion of dihydroxyacetone phosphate (DHAP) to D-glyceraldehyde-3-phosphate (G3P). The sequence is that of Triosephosphate isomerase from Mycobacterium sp. (strain JLS).